Consider the following 324-residue polypeptide: 7,8-didemethyl-8-hydroxy-5-deazariboflavin synthase (324 aa).

In terms of domain architecture, Radical SAM core spans 4–239 (VTYSKNVFIP…QEVAIQIPPN (236 aa)). [4Fe-4S] cluster-binding residues include cysteine 18, cysteine 22, and cysteine 25.

It belongs to the radical SAM superfamily. CofG family. Consists of two subunits, CofG and CofH. The cofactor is [4Fe-4S] cluster.

The enzyme catalyses 5-amino-5-(4-hydroxybenzyl)-6-(D-ribitylimino)-5,6-dihydrouracil + S-adenosyl-L-methionine = 7,8-didemethyl-8-hydroxy-5-deazariboflavin + 5'-deoxyadenosine + L-methionine + NH4(+) + H(+). The protein operates within cofactor biosynthesis; coenzyme F0 biosynthesis. Its function is as follows. Catalyzes the radical-mediated synthesis of 7,8-didemethyl-8-hydroxy-5-deazariboflavin from 5-amino-5-(4-hydroxybenzyl)-6-(D-ribitylimino)-5,6-dihydrouracil. The chain is 7,8-didemethyl-8-hydroxy-5-deazariboflavin synthase from Archaeoglobus fulgidus (strain ATCC 49558 / DSM 4304 / JCM 9628 / NBRC 100126 / VC-16).